The following is a 538-amino-acid chain: Inositol phosphate phosphatase IpgD (538 aa).

Cys-439 is an active-site residue. Positions 439–445 (CKSGKDR) match the CX5R motif motif.

Belongs to the phosphatase IpgD/SopB family.

The protein localises to the secreted. It catalyses the reaction a 1,2-diacyl-sn-glycero-3-phospho-(1D-myo-inositol-4,5-bisphosphate) + H2O = a 1,2-diacyl-sn-glycero-3-phospho-(1D-myo-inositol-5-phosphate) + phosphate. In terms of biological role, converts phosphatidylinositol 4,5-bisphosphate (PtdIns 4,5-P2) to PtdIns 5-P. IpgD is injected by Shigella into the host cell and is required for invasion. The accumulation of PtdIns 5-P causes membrane ruffling and actin cytoskeleton rearrangements at the entry site. Acts in concert with IpaA to coordinate and control the membrane and cytoskeletal rearrangements induced early after invasion of the host cell. This chain is Inositol phosphate phosphatase IpgD (ipgD), found in Shigella flexneri.